Reading from the N-terminus, the 204-residue chain is Demethylsterigmatocystin 6-O-methyltransferase stcP (204 aa).

S-adenosyl-L-methionine-binding positions include 48–49 (GG), Asp-73, 93–94 (DF), and Arg-109. His-113 serves as the catalytic Proton acceptor.

It belongs to the class I-like SAM-binding methyltransferase superfamily. Cation-independent O-methyltransferase family.

The catalysed reaction is 6-demethylsterigmatocystin + S-adenosyl-L-methionine = sterigmatocystin + S-adenosyl-L-homocysteine + H(+). Its pathway is mycotoxin biosynthesis; sterigmatocystin biosynthesis. Norsolorinic acid reductase; part of the gene cluster that mediates the biosynthesis of sterigmatocystin (ST), a polyketide-derived furanocoumarin which is part of the most toxic and carcinogenic compounds among the known mycotoxins. The first step in the biosynthesis of sterigmatocystin is the production of hexanoate by the fatty acid synthase (FAS) units stcJ and stcK. The polyketide backbone is assembled by the non-reducing polyketide synthase stcA by condensation of the starter hexanoyl-CoA and 7 malonyl-CoA extender units followed by cyclization and release of norsolorinic acid. Norsolorinic acid is the first stable intermediate in the biosynthesis of sterigmatocystin and is converted into averantin (AVN) by the ketoreductase stcE which reduces the hexanoate ketone to an alcohol. Averantin is then oxidized into 5'-hydroxyaverantin (HAVN) by the cytochrome P450 monooxygenase stcF. 5'-hydroxyaverantin is further converted to 5'-oxyaverantin (OAVN) by the 5'-hydroxyaverantin dehydrogenase stcG. The next step is the conversion of OAVN into averufin (AVF) which is catalyzed by a yet to be identified enzyme. The cytochrome P450 monooxygenase stcB and the flavin-binding monooxygenase stcW are both required for the conversion of averufin to 1-hydroxyversicolorone. The esterase stcI probably catalyzes the formation of versiconal hemiacetal acetate from 1-hydroxyversicolorone. The oxydoreductase stcN then probably catalyzes the biosynthetic step from versiconal to versicolorin B (VERB). The next step is performed by the versicolorin B desaturase stcL to produce versicolorin A (VERA). The ketoreductase stcU and the cytochrome P450 monooxygenase stcS are involved in the conversion of versicolorin A to demethylsterigmatocystin. The Baeyer-Villiger oxidas stcQ and the reductase stcR might be involved in the biosynthetic step from versicolorin A to demethylsterigmatocystin. The final step in the biosynthesis of sterigmatocystin is the methylation of demethylsterigmatocystin catalyzed by the methyltransferase stcP. This chain is Demethylsterigmatocystin 6-O-methyltransferase stcP, found in Emericella nidulans (strain FGSC A4 / ATCC 38163 / CBS 112.46 / NRRL 194 / M139) (Aspergillus nidulans).